A 411-amino-acid polypeptide reads, in one-letter code: GTPase Obg (411 aa).

Positions 1-157 constitute an Obg domain; it reads MQFIDEARFV…REIRLELRVL (157 aa). Positions 20 to 45 are disordered; that stretch reads AVSFHREKYRPRGGPDGGRGGDGGSV. Over residues 33 to 43 the composition is skewed to gly residues; it reads GPDGGRGGDGG. The OBG-type G domain maps to 158–330; it reads SDVGLVGLPN…LERSAEAAPR (173 aa). GTP contacts are provided by residues 164–171, 189–193, 212–215, 276–279, and 311–313; these read GLPNAGKS, FTTLT, DIPG, NKVD, and ARL. Residues Ser171 and Thr191 each contribute to the Mg(2+) site. The OCT domain maps to 335–411; the sequence is VFRPSWRGLR…RIGDVSFEFR (77 aa).

The protein belongs to the TRAFAC class OBG-HflX-like GTPase superfamily. OBG GTPase family. As to quaternary structure, monomer. Mg(2+) serves as cofactor.

Its subcellular location is the cytoplasm. Functionally, an essential GTPase which binds GTP, GDP and possibly (p)ppGpp with moderate affinity, with high nucleotide exchange rates and a fairly low GTP hydrolysis rate. Plays a role in control of the cell cycle, stress response, ribosome biogenesis and in those bacteria that undergo differentiation, in morphogenesis control. In Rubrobacter xylanophilus (strain DSM 9941 / JCM 11954 / NBRC 16129 / PRD-1), this protein is GTPase Obg.